The chain runs to 253 residues: Imidazole glycerol phosphate synthase subunit HisF (253 aa).

Active-site residues include aspartate 11 and aspartate 130.

This sequence belongs to the HisA/HisF family. Heterodimer of HisH and HisF.

Its subcellular location is the cytoplasm. The catalysed reaction is 5-[(5-phospho-1-deoxy-D-ribulos-1-ylimino)methylamino]-1-(5-phospho-beta-D-ribosyl)imidazole-4-carboxamide + L-glutamine = D-erythro-1-(imidazol-4-yl)glycerol 3-phosphate + 5-amino-1-(5-phospho-beta-D-ribosyl)imidazole-4-carboxamide + L-glutamate + H(+). Its pathway is amino-acid biosynthesis; L-histidine biosynthesis; L-histidine from 5-phospho-alpha-D-ribose 1-diphosphate: step 5/9. IGPS catalyzes the conversion of PRFAR and glutamine to IGP, AICAR and glutamate. The HisF subunit catalyzes the cyclization activity that produces IGP and AICAR from PRFAR using the ammonia provided by the HisH subunit. The chain is Imidazole glycerol phosphate synthase subunit HisF from Opitutus terrae (strain DSM 11246 / JCM 15787 / PB90-1).